A 59-amino-acid polypeptide reads, in one-letter code: Embryonic testis differentiation protein homolog A (59 aa).

Residues 1–10 (MDKEVPKGSP) show a composition bias toward basic and acidic residues. The disordered stretch occupies residues 1-25 (MDKEVPKGSPREPALNIKKSDKSFK).

This chain is Embryonic testis differentiation protein homolog A, found in Homo sapiens (Human).